A 247-amino-acid polypeptide reads, in one-letter code: E3 ubiquitin-protein ligase RNF182 (247 aa).

The RING-type zinc-finger motif lies at cysteine 20–arginine 68. 2 helical membrane-spanning segments follow: residues valine 184–leucine 204 and leucine 211–phenylalanine 231.

In terms of assembly, interacts with ATP6V0C.

The protein resides in the membrane. Its subcellular location is the cytoplasm. The catalysed reaction is S-ubiquitinyl-[E2 ubiquitin-conjugating enzyme]-L-cysteine + [acceptor protein]-L-lysine = [E2 ubiquitin-conjugating enzyme]-L-cysteine + N(6)-ubiquitinyl-[acceptor protein]-L-lysine.. It functions in the pathway protein modification; protein ubiquitination. Functionally, E3 ubiquitin-protein ligase that mediates the ubiquitination of ATP6V0C and targets it to degradation via the ubiquitin-proteasome pathway. Also plays a role in the inhibition of TLR-triggered innate immune response by mediating 'Lys'-48-linked ubiquitination and subsequent degradation of NF-kappa-B component RELA. The protein is E3 ubiquitin-protein ligase RNF182 (Rnf182) of Rattus norvegicus (Rat).